The chain runs to 83 residues: Small ribosomal subunit protein bS16 (83 aa).

The protein belongs to the bacterial ribosomal protein bS16 family.

The polypeptide is Small ribosomal subunit protein bS16 (Pseudomonas aeruginosa (strain LESB58)).